A 55-amino-acid polypeptide reads, in one-letter code: Large ribosomal subunit protein bL33 (55 aa).

The protein belongs to the bacterial ribosomal protein bL33 family.

The polypeptide is Large ribosomal subunit protein bL33 (Vibrio atlanticus (strain LGP32) (Vibrio splendidus (strain Mel32))).